The following is a 363-amino-acid chain: Peptide chain release factor 1 (363 aa).

Gln237 carries the N5-methylglutamine modification.

This sequence belongs to the prokaryotic/mitochondrial release factor family. Post-translationally, methylated by PrmC. Methylation increases the termination efficiency of RF1.

It localises to the cytoplasm. Functionally, peptide chain release factor 1 directs the termination of translation in response to the peptide chain termination codons UAG and UAA. The sequence is that of Peptide chain release factor 1 from Mesoplasma florum (strain ATCC 33453 / NBRC 100688 / NCTC 11704 / L1) (Acholeplasma florum).